A 151-amino-acid polypeptide reads, in one-letter code: Cell division protein SepF (151 aa).

This sequence belongs to the SepF family. As to quaternary structure, homodimer. Interacts with FtsZ.

The protein localises to the cytoplasm. Its function is as follows. Cell division protein that is part of the divisome complex and is recruited early to the Z-ring. Probably stimulates Z-ring formation, perhaps through the cross-linking of FtsZ protofilaments. Its function overlaps with FtsA. The chain is Cell division protein SepF from Desulfitobacterium hafniense (strain Y51).